Consider the following 166-residue polypeptide: Shikimate kinase (166 aa).

11–16 (GSGKST) is a binding site for ATP. S15 lines the Mg(2+) pocket. Substrate contacts are provided by D33, R57, and G79. ATP is bound at residue R117. Substrate is bound at residue R134.

It belongs to the shikimate kinase family. Monomer. The cofactor is Mg(2+).

Its subcellular location is the cytoplasm. The catalysed reaction is shikimate + ATP = 3-phosphoshikimate + ADP + H(+). The protein operates within metabolic intermediate biosynthesis; chorismate biosynthesis; chorismate from D-erythrose 4-phosphate and phosphoenolpyruvate: step 5/7. Functionally, catalyzes the specific phosphorylation of the 3-hydroxyl group of shikimic acid using ATP as a cosubstrate. In Sulfurihydrogenibium sp. (strain YO3AOP1), this protein is Shikimate kinase.